A 152-amino-acid chain; its full sequence is ADP-ribose glycohydrolase OARD1 (152 aa).

A2 bears the N-acetylalanine mark. One can recognise a Macro domain in the interval 2–152; that stretch reads ASSLNEDPEG…TDIKITVYTL (151 aa). The residue at position 4 (S4) is a Phosphoserine. L21 provides a ligand contact to substrate. K84 acts as the Nucleophile in catalysis. Residues 119–125 and L152 contribute to the substrate site; that span reads RIGCGLD. The active-site Proton acceptor is the D125.

As to expression, ubiquitous.

The protein localises to the nucleus. It is found in the nucleoplasm. The protein resides in the nucleolus. Its subcellular location is the chromosome. It carries out the reaction 2''-O-acetyl-ADP-D-ribose + H2O = ADP-D-ribose + acetate + H(+). It catalyses the reaction 5-O-(ADP-D-ribosyl)-L-glutamyl-[protein] + H2O = L-glutamyl-[protein] + ADP-D-ribose + H(+). The catalysed reaction is alpha-NAD(+) + H2O = ADP-D-ribose + nicotinamide + H(+). Subject to competitive inhibition by the product ADP-ribose. Its function is as follows. ADP-ribose glycohydrolase that hydrolyzes ADP-ribose and acts on different substrates, such as proteins ADP-ribosylated on glutamate and O-acetyl-ADP-D-ribose. Specifically acts as a glutamate mono-ADP-ribosylhydrolase by mediating the removal of mono-ADP-ribose attached to glutamate residues on proteins. Does not act on poly-ADP-ribosylated proteins: the poly-ADP-ribose chain of poly-ADP-ribosylated glutamate residues must by hydrolyzed into mono-ADP-ribosylated glutamate by PARG to become a substrate for OARD1. Deacetylates O-acetyl-ADP ribose, a signaling molecule generated by the deacetylation of acetylated lysine residues in histones and other proteins. Catalyzes the deacylation of O-acetyl-ADP-ribose, O-propionyl-ADP-ribose and O-butyryl-ADP-ribose, yielding ADP-ribose plus acetate, propionate and butyrate, respectively. This chain is ADP-ribose glycohydrolase OARD1, found in Homo sapiens (Human).